A 505-amino-acid polypeptide reads, in one-letter code: Ent-kaurene oxidase 2 (505 aa).

Residues 3 to 23 (AFVPGGAGAAAAAVGGFVAAA) traverse the membrane as a helical segment. Cys449 provides a ligand contact to heme.

The protein belongs to the cytochrome P450 family. Heme is required as a cofactor. As to expression, widely expressed.

It is found in the membrane. It carries out the reaction ent-kaur-16-ene + 3 reduced [NADPH--hemoprotein reductase] + 3 O2 = ent-kaur-16-en-19-oate + 3 oxidized [NADPH--hemoprotein reductase] + 4 H2O + 4 H(+). Its pathway is plant hormone biosynthesis; gibberellin biosynthesis. Its function is as follows. Catalyzes three successive oxidations of the 4-methyl group of ent-kaurene giving kaurenoic acid, a key step in gibberellins (GAs) biosynthesis. GAs, which are involved many processes, including stem elongation, play a central role in plant development. This is Ent-kaurene oxidase 2 from Oryza sativa subsp. japonica (Rice).